A 356-amino-acid chain; its full sequence is MSPCGRARRQTSRGAMAVLAWKFPRTRLPMGASALCVVVLCWLYIFPVYRLPNEKEIVQGVLQQGTAWRRNQTAARAFRKQMEDCCDPAHLFAMTKMNSPMGKSMWYDGEFLYSFTIDNSTYSLFPQATPFQLPLKKCAVVGNGGILKKSGCGRQIDEANFVMRCNLPPLSSEYTKDVGSKSQLVTANPSIIRQRFQNLLWSRKTFVDNMKIYNHSYIYMPAFSMKTGTEPSLRVYYTLSDVGANQTVLFANPNFLRSIGKFWKSRGIHAKRLSTGLFLVSAALGLCEEVAIYGFWPFSVNMHEQPISHHYYDNVLPFSGFHAMPEEFLQLWYLHKIGALRMQLDPCEDTSLQPTS.

At 1 to 29 (MSPCGRARRQTSRGAMAVLAWKFPRTRLP) the chain is on the cytoplasmic side. The helical; Signal-anchor for type II membrane protein transmembrane segment at 30–48 (MGASALCVVVLCWLYIFPV) threads the bilayer. The Lumenal portion of the chain corresponds to 49–356 (YRLPNEKEIV…CEDTSLQPTS (308 aa)). 2 N-linked (GlcNAc...) asparagine glycosylation sites follow: N71 and N119. Disulfide bonds link C138–C287 and C152–C347. Residues N143 and N166 each coordinate CMP-N-acetyl-beta-neuraminate. N-linked (GlcNAc...) asparagine glycans are attached at residues N214 and N245. Positions 274, 275, 276, 296, and 310 each coordinate CMP-N-acetyl-beta-neuraminate. H322 serves as the catalytic Proton donor/acceptor.

This sequence belongs to the glycosyltransferase 29 family. As to expression, strongly expressed in melanoma cell lines, adult and fetal brain and to a lesser extent in adult and fetal lung.

It is found in the golgi apparatus membrane. The enzyme catalyses an N-acetyl-alpha-neuraminyl-(2-&gt;3)-beta-D-galactosyl derivative + CMP-N-acetyl-beta-neuraminate = an N-acetyl-alpha-neuraminyl-(2-&gt;8)-N-acetyl-alpha-neuraminyl-(2-&gt;3)-beta-D-galactosyl derivative + CMP + H(+). The catalysed reaction is a ganglioside GM3 (d18:1(4E)) + CMP-N-acetyl-beta-neuraminate = a ganglioside GD3 (d18:1(4E)) + CMP + H(+). It catalyses the reaction a ganglioside GD3 (d18:1(4E)) + CMP-N-acetyl-beta-neuraminate = a ganglioside GT3 (d18:1(4E)) + CMP + H(+). It carries out the reaction a ganglioside GD1a (d18:1(4E)) + CMP-N-acetyl-beta-neuraminate = a ganglioside GT1a (d18:1(4E)) + CMP + H(+). The enzyme catalyses a ganglioside GT1b (d18:1(4E)) + CMP-N-acetyl-beta-neuraminate = a ganglioside GQ1b (d18:1(4E)) + CMP + H(+). The catalysed reaction is a ganglioside GM1b (d18:1(4E)) + CMP-N-acetyl-beta-neuraminate = a ganglioside GD1c (d18:1(4E)) + CMP + H(+). It catalyses the reaction a ganglioside GD3 + CMP-N-acetyl-beta-neuraminate = a ganglioside GT3 + CMP + H(+). It carries out the reaction [alpha-N-acetylneuraminyl-(2-&gt;8)](n)-alpha-N-acetylneuraminyl-(2-&gt;8)-alpha-N-acetylneuraminyl-(2-&gt;3)-beta-D-galactosyl-(1-&gt;4)-beta-D-glucosyl-(1&lt;-&gt;1)-ceramide + CMP-N-acetyl-beta-neuraminate = [alpha-N-acetylneuraminyl-(2-&gt;8)](n+1)-alpha-N-acetylneuraminyl-(2-&gt;8)-alpha-N-acetylneuraminyl-(2-&gt;3)-beta-D-galactosyl-(1-&gt;4)-beta-D-glucosyl-(1&lt;-&gt;1)-ceramide + CMP + H(+). The protein operates within protein modification; protein glycosylation. Its pathway is lipid metabolism; sphingolipid metabolism. Its function is as follows. Catalyzes the addition of sialic acid in alpha 2,8-linkage to the sialic acid moiety of the ganglioside GM3 to form ganglioside GD3; gangliosides are a subfamily of complex glycosphingolipds that contain one or more residues of sialic acid. Can catalyze the addition of a second alpha-2,8-sialic acid to GD3 to form GT3. Can use GM1b, GD1a and GT1b as acceptor substrates to synthesize GD1c, GT1a and GQ1b respectively. Can synthesize unusual tetra- and pentasialylated lactosylceramide derivatives identified as GQ3 (II3Neu5Ac4-Gg2Cer) and GP3 (II3Neu5Ac5-Gg2Cer) in breast cancer cells. The sequence is that of Alpha-N-acetylneuraminide alpha-2,8-sialyltransferase from Homo sapiens (Human).